A 235-amino-acid chain; its full sequence is Small ribosomal subunit protein uS2c (235 aa).

This sequence belongs to the universal ribosomal protein uS2 family.

Its subcellular location is the plastid. It is found in the chloroplast. This chain is Small ribosomal subunit protein uS2c (rps2), found in Anthoceros angustus (Hornwort).